The following is an 83-amino-acid chain: Small ribosomal subunit protein uS17 (83 aa).

The protein belongs to the universal ribosomal protein uS17 family. Part of the 30S ribosomal subunit.

Its function is as follows. One of the primary rRNA binding proteins, it binds specifically to the 5'-end of 16S ribosomal RNA. The chain is Small ribosomal subunit protein uS17 from Buchnera aphidicola subsp. Acyrthosiphon pisum (strain 5A).